We begin with the raw amino-acid sequence, 490 residues long: Dual specificity protein kinase CLK3 (490 aa).

Residues methionine 1–aspartate 138 form a disordered region. Tyrosine 7 carries the post-translational modification Phosphotyrosine. A phosphoserine mark is found at serine 9, serine 49, serine 51, serine 67, serine 76, and serine 78. Composition is skewed to basic and acidic residues over residues tyrosine 26–proline 56 and glutamate 63–serine 76. Basic residues predominate over residues arginine 88–arginine 116. The segment covering serine 117 to lysine 130 has biased composition (low complexity). Serine 135 carries the post-translational modification Phosphoserine. In terms of domain architecture, Protein kinase spans tyrosine 156–phenylalanine 472. ATP is bound by residues leucine 162–valine 170 and lysine 186. Aspartate 283 acts as the Proton acceptor in catalysis.

It belongs to the protein kinase superfamily. CMGC Ser/Thr protein kinase family. Lammer subfamily. In terms of processing, autophosphorylates on all three types of residues. Present at high levels in testis and ovary. In testis, expression is restricted to elongated, maturing spermatozoa. Also present in spleen, brain, lung and liver (at protein level).

The protein resides in the nucleus. It is found in the cytoplasm. Its subcellular location is the cytoplasmic vesicle. The protein localises to the secretory vesicle. It localises to the acrosome. The enzyme catalyses L-seryl-[protein] + ATP = O-phospho-L-seryl-[protein] + ADP + H(+). The catalysed reaction is L-threonyl-[protein] + ATP = O-phospho-L-threonyl-[protein] + ADP + H(+). It carries out the reaction L-tyrosyl-[protein] + ATP = O-phospho-L-tyrosyl-[protein] + ADP + H(+). Leucettine L41 inhibits its kinase activity and affects the regulation of alternative splicing mediated by phosphorylation of SR proteins. In terms of biological role, dual specificity kinase acting on both serine/threonine and tyrosine-containing substrates. Phosphorylates serine- and arginine-rich (SR) proteins of the spliceosomal complex. May be a constituent of a network of regulatory mechanisms that enable SR proteins to control RNA splicing and can cause redistribution of SR proteins from speckles to a diffuse nucleoplasmic distribution. Phosphorylates SRSF1 and SRSF3. Regulates the alternative splicing of tissue factor (F3) pre-mRNA in endothelial cells. The sequence is that of Dual specificity protein kinase CLK3 from Mus musculus (Mouse).